A 276-amino-acid chain; its full sequence is 2,3,4,5-tetrahydropyridine-2,6-dicarboxylate N-succinyltransferase (276 aa).

R100 and D137 together coordinate substrate.

Belongs to the transferase hexapeptide repeat family. Homotrimer.

It is found in the cytoplasm. The enzyme catalyses (S)-2,3,4,5-tetrahydrodipicolinate + succinyl-CoA + H2O = (S)-2-succinylamino-6-oxoheptanedioate + CoA. Its pathway is amino-acid biosynthesis; L-lysine biosynthesis via DAP pathway; LL-2,6-diaminopimelate from (S)-tetrahydrodipicolinate (succinylase route): step 1/3. This chain is 2,3,4,5-tetrahydropyridine-2,6-dicarboxylate N-succinyltransferase, found in Zymomonas mobilis subsp. mobilis (strain ATCC 31821 / ZM4 / CP4).